The sequence spans 419 residues: UDP-N-acetylglucosamine 1-carboxyvinyltransferase (419 aa).

22-23 (KN) contacts phosphoenolpyruvate. A UDP-N-acetyl-alpha-D-glucosamine-binding site is contributed by R93. The active-site Proton donor is the C117. 2-(S-cysteinyl)pyruvic acid O-phosphothioketal is present on C117. Residues D306 and I328 each coordinate UDP-N-acetyl-alpha-D-glucosamine.

It belongs to the EPSP synthase family. MurA subfamily.

The protein resides in the cytoplasm. It carries out the reaction phosphoenolpyruvate + UDP-N-acetyl-alpha-D-glucosamine = UDP-N-acetyl-3-O-(1-carboxyvinyl)-alpha-D-glucosamine + phosphate. The protein operates within cell wall biogenesis; peptidoglycan biosynthesis. Its function is as follows. Cell wall formation. Adds enolpyruvyl to UDP-N-acetylglucosamine. The chain is UDP-N-acetylglucosamine 1-carboxyvinyltransferase from Magnetococcus marinus (strain ATCC BAA-1437 / JCM 17883 / MC-1).